A 225-amino-acid chain; its full sequence is ATP-dependent Clp protease proteolytic subunit (225 aa).

Ser-123 functions as the Nucleophile in the catalytic mechanism. His-148 is an active-site residue.

Belongs to the peptidase S14 family. Fourteen ClpP subunits assemble into 2 heptameric rings which stack back to back to give a disk-like structure with a central cavity, resembling the structure of eukaryotic proteasomes.

The protein resides in the cytoplasm. The catalysed reaction is Hydrolysis of proteins to small peptides in the presence of ATP and magnesium. alpha-casein is the usual test substrate. In the absence of ATP, only oligopeptides shorter than five residues are hydrolyzed (such as succinyl-Leu-Tyr-|-NHMec, and Leu-Tyr-Leu-|-Tyr-Trp, in which cleavage of the -Tyr-|-Leu- and -Tyr-|-Trp bonds also occurs).. Cleaves peptides in various proteins in a process that requires ATP hydrolysis. Has a chymotrypsin-like activity. Plays a major role in the degradation of misfolded proteins. This is ATP-dependent Clp protease proteolytic subunit from Chlorobium chlorochromatii (strain CaD3).